The following is a 138-amino-acid chain: Histone H3-like centromeric protein A (138 aa).

Residues 1–40 form a disordered region; the sequence is MGPRRQKRKPETPRRRPASPAPAAPRPTPSLGTSSRPLAR. Residue Gly2 is modified to N,N,N-trimethylglycine. Ser19 carries the post-translational modification Phosphoserine. Pro residues predominate over residues 19-28; sequence SPAPAAPRPT. An important for flexibility of DNA ends that protrude from nucleosomes region spans residues 37 to 52; it reads PLARRRHTVLKEIRTL. An H3-like region spans residues 39 to 138; the sequence is ARRRHTVLKE…RIRGIQEGLG (100 aa). Residues 73–114 are CATD; the sequence is CVQFTRGVDFNWQAQALLALQEAAEAFLVHLFEDAYLLSLHA.

It belongs to the histone H3 family. Component of centromeric nucleosomes, where DNA is wrapped around a histone octamer core. The octamer contains two molecules each of H2A, H2B, CENPA and H4 assembled in one CENPA-H4 heterotetramer and two H2A-H2B heterodimers. CENPA modulates the DNA-binding characteristics of nucleosomes so that protruding DNA ends have higher flexibility than in nucleosomes containing conventional histone H3. Inhibits binding of histone H1 to nucleosomes, since histone H1 binds preferentially to rigid DNA linkers that protrude from nucleosomes. Nucleosomes containing CENPA also contain histone H2A variants such as MACROH2A and H2A.Z/H2AZ1. The CENPA-H4 heterotetramer is more compact and structurally more rigid than corresponding H3-H4 heterotetramers. Can assemble into nucleosomes that contain both CENPA and histone H3.3; these nucleosomes interact with a single CENPC chain. Heterotrimer composed of HJURP, CENPA and histone H4, where HJURP interacts with the dimer formed by CENPA and histone H4 and prevents tetramerization of CENPA and H4. Component of the CENPA-NAC complex, at least composed of CENPA, CENPC, CENPH, CENPM, CENPN, CENPT and CENPU. Interacts (via CATD domain) with HJURP; the interaction is direct and is required for its localization to centromeres. Interacts with CENPC, CENPN and CENPT; interaction is direct. Part of a centromere complex consisting of CENPA, CENPT and CENPW. Identified in centromere complexes containing histones H2A, H2B and H4, and at least CENPA, CENPB, CENPC, CENPT, CENPN, HJURP, SUPT16H, SSRP1 and RSF1. Can self-associate. The CENPA-H4 heterotetramer can bind DNA by itself (in vitro). Interacts with CDK1, PPP1CA and RBBP7. Trimethylated by NTMT1 at the N-terminal glycine after cleavage of Met-1. Methylation is low before incorporation into nucleosomes and increases with cell cycle progression, with the highest levels in mitotic nucleosomes. Post-translationally, poly-ADP-ribosylated by PARP1.

Its subcellular location is the nucleus. The protein resides in the chromosome. The protein localises to the centromere. Functionally, histone H3-like nucleosomal protein that is specifically found in centromeric nucleosomes. Replaces conventional H3 in the nucleosome core of centromeric chromatin that serves as an assembly site for the inner kinetochore. The presence of CENPA subtly modifies the nucleosome structure and the way DNA is wrapped around the nucleosome and gives rise to protruding DNA ends that are less well-ordered and rigid compared to nucleosomes containing histone H3. May serve as an epigenetic mark that propagates centromere identity through replication and cell division. Required for recruitment and assembly of kinetochore proteins, and as a consequence required for progress through mitosis, chromosome segregation and cytokinesis. This chain is Histone H3-like centromeric protein A (CENPA), found in Bos taurus (Bovine).